A 903-amino-acid polypeptide reads, in one-letter code: MKEFYLTVEQIGDSIFERYIDSNGRERTREVEYKPSLFAHCPESQATKYFDIYGKPCTRKLFANMRDASQWIKRMEDIGLEALGMDDFKLAYLSDTYNYEIKYDHTKIRVANFDIEVTSPDGFPEPSQAKHPIDAITHYDSIDDRFYVFDLLNSPYGNVEEWSIEIAAKLQEQGGDEVPSEIIDKIIYMPFDNEKELLMEYLNFWQQKTPVILTGWNVESFDIPYVYNRIKNIFGESTAKRLSPHRKTRVKVIENMYGSREIITLFGISVLDYIDLYKKFSFTNQPSYSLDYISEFELNVGKLKYDGPISKLRESNHQRYISYNIIDVYRVLQIDAKRQFINLSLDMGYYAKIQIQSVFSPIKTWDAIIFNSLKEQNKVIPQGRSHPVQPYPGAFVKEPIPNRYKYVMSFDLTSLYPSIIRQVNISPETIAGTFKVAPLHDYINAVAERPSDVYSCSPNGMMYYKDRDGVVPTEITKVFNQRKEHKGYMLAAQRNGEIIKEALHNPNLSVDEPLDVDYRFDFSDEIKEKIKKLSAKSLNEMLFRAQRTEVAGMTAQINRKLLINSLYGALGNVWFRYYDLRNATAITTFGQMALQWIERKVNEYLNEVCGTEGEAFVLYGDTDSIYVSADKIIDKVGESKFRDTNHWVDFLDKFARERMEPAIDRGFREMCEYMNNKQHLMFMDREAIAGPPLGSKGIGGFWTGKKRYALNVWDMEGTRYAEPKLKIMGLETQKSSTPKAVQKALKECIRRMLQEGEESLQEYFKEFEKEFRQLNYISIASVSSANNIAKYDVGGFPGPKCPFHIRGILTYNRAIKGNIDAPQVVEGEKVYVLPLREGNPFGDKCIAWPSGTEITDLIKDDVLHWMDYTVLLEKTFIKPLEGFTSAAKLDYEKKASLFDMFDF.

Positions 103 to 340 (YDHTKIRVAN…VLQIDAKRQF (238 aa)) are 3'-5'exonuclease. Positions 114, 116, and 222 each coordinate Mg(2+). The tract at residues 248-264 (TRVKVIENMYGSREIIT) is beta hairpin. The Mg(2+) site is built by aspartate 327, aspartate 411, and leucine 412. A polymerase region spans residues 380–903 (IPQGRSHPVQ…KASLFDMFDF (524 aa)). Substrate contacts are provided by residues 414–416 (SLY), arginine 482, and lysine 560. Residue aspartate 623 coordinates Mg(2+). The tract at residues 705 to 708 (KKRY) is binding of DNA in B-conformation. An interaction with the polymerase clamp region spans residues 897–903 (LFDMFDF).

The protein belongs to the DNA polymerase type-B family. Part of the replicase complex that includes the DNA polymerase, the polymerase clamp, the clamp loader complex, the single-stranded DNA binding protein, and the primase/helicase. Interacts with the polymerase clamp; this interaction constitutes the polymerase holoenzyme. It depends on Mg(2+) as a cofactor.

It catalyses the reaction DNA(n) + a 2'-deoxyribonucleoside 5'-triphosphate = DNA(n+1) + diphosphate. Its function is as follows. Replicates the viral genomic DNA. This polymerase possesses two enzymatic activities: DNA synthesis (polymerase) and an exonucleolytic activity that degrades single-stranded DNA in the 3'- to 5'-direction for proofreading purpose. This chain is DNA-directed DNA polymerase (43), found in Escherichia coli (Bacteriophage RB69).